The primary structure comprises 415 residues: Arrestin domain-containing protein 4 (415 aa).

2 short sequence motifs (PPxY motif) span residues 347–350 (PPNY) and 392–395 (PPLY).

Belongs to the arrestin family. As to quaternary structure, interacts with ADRB2. Interacts (via PPxY motifs) with ITCH, NEDD4L and WWP2. Interacts with AVPR2. Identified in a complex containing at least ARRDC4, AVPR2 and HGS. Interacts with SLC11A2; controls the incorporation of SLC11A2 into extracellular vesicles through an ubiquitination-dependent mechanism. Interacts with TRIM65.

The protein localises to the early endosome. The protein resides in the cell membrane. It is found in the cytoplasmic vesicle. Functionally, functions as an adapter recruiting ubiquitin-protein ligases to their specific substrates. Plays a role in endocytosis of activated G protein-coupled receptors (GPCRs). Through an ubiquitination-dependent mechanism also plays a role in the incorporation of SLC11A2 into extracellular vesicles. May play a role in glucose uptake. Participates in innate immune response by promoting IFIH1/MDA5 activation through interaction with TRIM65. This chain is Arrestin domain-containing protein 4, found in Mus musculus (Mouse).